The sequence spans 337 residues: Hairy/enhancer-of-split related with YRPW motif protein 2 (337 aa).

Positions 1 to 52 (MKRPCEETTSESDMDETIDVGSENNYSGQSTSSVIRLNSPTTTSQIMARKKR) are disordered. The segment covering 8–18 (TTSESDMDETI) has biased composition (acidic residues). Over residues 22–46 (SENNYSGQSTSSVIRLNSPTTTSQI) the composition is skewed to polar residues. The transcriptional repression and interaction with NCOR1 and SIN3A stretch occupies residues 47–116 (MARKKRRGII…GGKGYFDAHA (70 aa)). The bHLH domain occupies 48–103 (ARKKRRGIIEKRRRDRINNSLSELRRLVPTAFEKQGSAKLEKAEILQMTVDHLKML). One can recognise an Orange domain in the interval 122–157 (MSIGFRECLTEVARYLSSVEGLDSSDPLRVRLVSHL). Polar residues predominate over residues 307–325 (LSVSATSSPQQTSSGTNNK). A disordered region spans residues 307–337 (LSVSATSSPQQTSSGTNNKPYRPWGTEVGAF). Residues 327–330 (YRPW) carry the YRPW motif motif.

Belongs to the HEY family. In terms of assembly, may self-associate. Interacts with GATA4, HES1 and HEYL. Interacts with HDAC1, NCOR1 and SIN3A. Interacts with ARNT and GATA6.

The protein resides in the nucleus. Downstream effector of Notch signaling which may be required for cardiovascular development. Transcriptional repressor which binds preferentially to the canonical E box sequence 5'-CACGTG-3'. Represses transcription by the cardiac transcriptional activators GATA4 and GATA6. In Homo sapiens (Human), this protein is Hairy/enhancer-of-split related with YRPW motif protein 2 (HEY2).